A 1051-amino-acid polypeptide reads, in one-letter code: Kinesin-like protein KIN-UC (1051 aa).

Low complexity-rich tracts occupy residues 1–12 (MSSSNSSSAVRS), 28–39 (NSNHAVSLSSSS), and 64–90 (SASS…PVRR). Disordered stretches follow at residues 1-39 (MSSS…SSSS) and 51-109 (PGIA…RVSV). The Kinesin motor domain occupies 104 to 441 (RVRVSVRVRP…IMFGQRAMKI (338 aa)). ATP is bound at residue 189–196 (GQTGTGKT). The short motif at 411 to 419 (RTSLIITIG) is the D-BOX element. 2 coiled-coil regions span residues 452–534 (DYES…QKDQ) and 568–761 (DTSQ…KRYM). Residues 753-766 (NVVEEKRYMKEDLS) show a composition bias toward basic and acidic residues. The tract at residues 753 to 788 (NVVEEKRYMKEDLSKGSAESGAQTGSQRSQGLKKSL) is disordered. Positions 772-788 (SGAQTGSQRSQGLKKSL) are enriched in polar residues. ARM repeat units follow at residues 792-831 (RATM…NLAA), 833-873 (EANQ…NLAM), and 875-915 (EKSQ…NLCG). One copy of the ARM 4; degenerate repeat lies at 917–956 (EKFLKLLKEEEGIKGLLTMAQSGNIDIIAQVARGMANFAK).

This sequence belongs to the TRAFAC class myosin-kinesin ATPase superfamily. Kinesin family. Ungrouped subfamily. As to quaternary structure, interacts (via C-terminus) with NEK5. In terms of tissue distribution, expressed in young root hair-forming cells and in root hair-producing cells at the boundary between the hypocotyl and root. Expressed in cotyledons, young leaves, trichomes and flowers.

It is found in the cytoplasm. The protein resides in the cytoskeleton. The protein localises to the spindle. It localises to the phragmoplast. Functionally, acts as a plus-end microtubule-dependent motor protein. Involved in the control of root hair tip growth by promoting microtubule depolymerization and limiting the accumulation of endoplasmic microtubules. In vitro, binds to polymerized actin through ARM repeats, and to polymerized tubulin through N-terminal motor domain. This Arabidopsis thaliana (Mouse-ear cress) protein is Kinesin-like protein KIN-UC.